Consider the following 265-residue polypeptide: Regulator of calcineurin 2 (265 aa).

Phosphoserine occurs at positions 104 and 110. Disordered stretches follow at residues 127 to 213 (LLSI…DKSA) and 242 to 265 (ENDV…EFFH). Position 132 is a phosphothreonine (Thr-132). Low complexity-rich tracts occupy residues 141–161 (SSSL…LESP) and 182–202 (LSRS…QTSL). Residues Ser-152, Ser-157, Ser-160, Ser-183, Ser-187, Ser-193, Ser-201, and Ser-255 each carry the phosphoserine modification.

Post-translationally, phosphorylation of Ser-152 and Ser-160 is induced 2-fold in response to mating pheromone.

The protein resides in the cytoplasm. This chain is Regulator of calcineurin 2 (RCN2), found in Saccharomyces cerevisiae (strain ATCC 204508 / S288c) (Baker's yeast).